Consider the following 172-residue polypeptide: Adenine phosphoribosyltransferase (172 aa).

Belongs to the purine/pyrimidine phosphoribosyltransferase family. Homodimer.

The protein resides in the cytoplasm. It catalyses the reaction AMP + diphosphate = 5-phospho-alpha-D-ribose 1-diphosphate + adenine. The protein operates within purine metabolism; AMP biosynthesis via salvage pathway; AMP from adenine: step 1/1. Catalyzes a salvage reaction resulting in the formation of AMP, that is energically less costly than de novo synthesis. The chain is Adenine phosphoribosyltransferase from Hydrogenovibrio crunogenus (strain DSM 25203 / XCL-2) (Thiomicrospira crunogena).